The primary structure comprises 149 residues: MKLFIILATATLLIAATQATYPRDEGFDLGETQMSSKCMRQVKMNEPHLKKCNRYIAMDILDDKYAEALSRVEGEGCKSEESCMRGCCVAMKEMDDECVCEWMKMMVENQKGRIGERLIKEGVRDLKELPSKCGLSELECGSRGNRYFV.

The signal sequence occupies residues 1-22; the sequence is MKLFIILATATLLIAATQATYP. Intrachain disulfides connect Cys38-Cys98, Cys52-Cys87, Cys88-Cys133, and Cys100-Cys140. Positions 121 to 128 are igE-binding; that stretch reads EGVRDLKE.

Belongs to the 2S seed storage albumins family. As to expression, expressed in seeds (at protein level).

In terms of biological role, seed storage protein. This chain is 2S seed storage albumin protein, found in Fagopyrum esculentum (Common buckwheat).